The following is a 407-amino-acid chain: Putative replication protein A (407 aa).

The protein belongs to the ParA family.

This is Putative replication protein A from Sinorhizobium fredii (strain NBRC 101917 / NGR234).